The following is a 481-amino-acid chain: ATP synthase subunit beta, chloroplastic (481 aa).

162–169 contributes to the ATP binding site; the sequence is GGAGVGKT.

It belongs to the ATPase alpha/beta chains family. F-type ATPases have 2 components, F(1) - the catalytic core - and F(0) - the membrane proton channel. F(1) has five subunits: alpha(3), beta(3), gamma(1), delta(1), epsilon(1). F(0) has four main subunits: a(1), b(1), b'(1) and c(10-14). The alpha and beta chains form an alternating ring which encloses part of the gamma chain. F(1) is attached to F(0) by a central stalk formed by the gamma and epsilon chains, while a peripheral stalk is formed by the delta, b and b' chains.

The protein resides in the plastid. It is found in the chloroplast thylakoid membrane. It carries out the reaction ATP + H2O + 4 H(+)(in) = ADP + phosphate + 5 H(+)(out). F(1)F(0) ATP synthase produces ATP from ADP in the presence of a proton or sodium gradient. F-type ATPases consist of two structural domains, F(1) containing the extramembraneous catalytic core and F(0) containing the membrane proton channel, linked together by a central stalk and a peripheral stalk. During catalysis, ATP synthesis in the catalytic domain of F(1) is coupled via a rotary mechanism of the central stalk subunits to proton translocation. Its function is as follows. Produces ATP from ADP in the presence of a proton gradient across the membrane. The catalytic sites are hosted primarily by the beta subunits. In Chlamydomonas reinhardtii (Chlamydomonas smithii), this protein is ATP synthase subunit beta, chloroplastic.